We begin with the raw amino-acid sequence, 235 residues long: Sugar fermentation stimulation protein homolog (235 aa).

This sequence belongs to the SfsA family.

The chain is Sugar fermentation stimulation protein homolog from Pseudomonas aeruginosa (strain ATCC 15692 / DSM 22644 / CIP 104116 / JCM 14847 / LMG 12228 / 1C / PRS 101 / PAO1).